The sequence spans 277 residues: MIOREX complex component 2 (277 aa).

It belongs to the NAD(P)-dependent epimerase/dehydratase family. In terms of assembly, associates with the mitochondrial ribosome. Component of a multi-subunit COQ enzyme complex.

The protein resides in the mitochondrion. It functions in the pathway cofactor biosynthesis; ubiquinone biosynthesis. Component of MIOREX complexes, large expressome-like assemblies of ribosomes with factors involved in all the steps of post-transcriptional gene expression. Component of a multi-subunit COQ enzyme complex required for coenzyme Q biosynthesis. This is MIOREX complex component 2 from Saccharomyces cerevisiae (strain ATCC 204508 / S288c) (Baker's yeast).